Consider the following 228-residue polypeptide: Ribose-5-phosphate isomerase A (228 aa).

Residues 32–35 (TGST), 85–88 (DGAD), and 98–101 (KGGG) contribute to the substrate site. Residue Glu-107 is the Proton acceptor of the active site. A substrate-binding site is contributed by Lys-125.

It belongs to the ribose 5-phosphate isomerase family. In terms of assembly, homodimer.

It catalyses the reaction aldehydo-D-ribose 5-phosphate = D-ribulose 5-phosphate. The protein operates within carbohydrate degradation; pentose phosphate pathway; D-ribose 5-phosphate from D-ribulose 5-phosphate (non-oxidative stage): step 1/1. In terms of biological role, catalyzes the reversible conversion of ribose-5-phosphate to ribulose 5-phosphate. This is Ribose-5-phosphate isomerase A from Ralstonia nicotianae (strain ATCC BAA-1114 / GMI1000) (Ralstonia solanacearum).